The primary structure comprises 512 residues: Tyrosine-protein kinase Lyn (512 aa).

A disordered region spans residues 1–50 (MGCIKSKRKDNLNDDGVDMKTQPVRNTDRTIYVRDPTSNKQQRPVPESQL). Glycine 2 carries N-myristoyl glycine lipidation. Cysteine 3 is lipidated: S-palmitoyl cysteine. The SH3 domain maps to 63–123 (EQGDIVVALY…PSNYVAKVNT (61 aa)). The SH2 domain occupies 129-226 (WFFKDITRKD…GLCRRLEKAC (98 aa)). Tyrosine 193 carries the post-translational modification Phosphotyrosine. Serine 228 carries the post-translational modification Phosphoserine. The Protein kinase domain occupies 247–501 (IKLVKKLGAG…YLQSVLDDFY (255 aa)). ATP is bound by residues 253–261 (LGAGQFGEV) and lysine 275. A phosphotyrosine mark is found at tyrosine 306 and tyrosine 316. Aspartate 367 acts as the Proton acceptor in catalysis. At tyrosine 397 the chain carries Phosphotyrosine; by autocatalysis. A phosphotyrosine mark is found at tyrosine 460 and tyrosine 473. Tyrosine 508 is subject to Phosphotyrosine; by autocatalysis, CSK and MATK.

Belongs to the protein kinase superfamily. Tyr protein kinase family. SRC subfamily. In terms of assembly, interacts with TEC. Interacts (via SH2 domain) with FLT3 (tyrosine phosphorylated). Interacts with LIME1 and with CD79A upon activation of the B-cell antigen receptor. Interacts with the B-cell receptor complex. Interacts with phosphorylated THEMIS2. Interacts with EPOR. Interacts with MS4A2/FCER1B. Interaction (via the SH2 and SH3 domains) with MUC1 is stimulated by IL7 and the subsequent phosphorylation increases the binding between MUC1 and CTNNB1/beta-catenin. Interacts with ADAM15. Interacts with NDFIP2 and more weakly with NDFIP1. Interacts with FASLG. Interacts with KIT. Interacts with HCLS1. Interacts with FCGR2B. Interacts with FCGR1A; the interaction may be indirect. Interacts with CD19, CD22, CD79A and CD79B. Interacts (via SH3 domain) with CBLC, PPP1R15A and PDE4A. Interacts with TGFB1I1. Interacts (via SH3 domain) with PIK3R1, the regulatory subunit of phosphatidylinositol 3-kinase; this interaction enhances phosphatidylinositol 3-kinase activity. Interacts with CSF2RB, the common subunit of the IL3, IL5 and CSF2 receptors. Interacts with PAG1; identified in a complex with PAG1 and STAT3. Interacts with ABL1. Interacts with PTPN6/SHP-1. Interacts (via SH3 domain) with SCIMP (via proline-rich region). This interaction facilitates the phosphorylation of SCIMP 'Tyr-96', which enhances binding of SCIMP to TLR4, and consequently the phosphorylation of TLR4 in response to stimulation by lipopolysaccharide in macrophages. Interacts with LPXN (via LD motif 3) and the interaction is induced upon B-cell antigen receptor (BCR) activation. Interacts (via SH3-domain) with ANKRD54 (via ankyrin repeat region) in an activation-independent status of LYN. Forms a multiprotein complex with ANKRD54 and HCLS1. Interacts (via SH2 and SH3 domains) with UNC119; leading to LYN activation. Interacts with CD36. Interacts with LYN. Interacts with SKAP1 and FYB1; this interaction promotes the phosphorylation of CLNK. Interacts with BCAR1/CAS and NEDD9/HEF1. Post-translationally, ubiquitinated. Ubiquitination is SH3-dependent. Autophosphorylated. Phosphorylated on tyrosine residues in response to KIT signaling. Phosphorylation at Tyr-397 is required for optimal activity. Phosphorylation at Tyr-508 inhibits kinase activity. Phosphorylated at Tyr-508 by CSK. Dephosphorylated by PTPRC/CD45. Becomes rapidly phosphorylated upon activation of the B-cell receptor and the immunoglobulin receptor FCGR1A. Phosphorylated in response to integrin ITGB1 in B-cells. In terms of tissue distribution, detected in spleen (at protein level). Expressed predominantly in B-lymphoid and myeloid cells.

Its subcellular location is the cell membrane. It localises to the nucleus. It is found in the cytoplasm. The protein resides in the perinuclear region. The protein localises to the golgi apparatus. Its subcellular location is the membrane. It carries out the reaction L-tyrosyl-[protein] + ATP = O-phospho-L-tyrosyl-[protein] + ADP + H(+). With respect to regulation, subject to autoinhibition, mediated by intramolecular interactions between the SH2 domain and the C-terminal phosphotyrosine. Phosphorylation at Tyr-397 is required for optimal activity. Phosphorylated by CSK at Tyr-508; phosphorylation at Tyr-508 inhibits kinase activity. Kinase activity is modulated by dephosphorylation by PTPRC/CD45. In terms of biological role, non-receptor tyrosine-protein kinase that transmits signals from cell surface receptors and plays an important role in the regulation of innate and adaptive immune responses, hematopoiesis, responses to growth factors and cytokines, integrin signaling, but also responses to DNA damage and genotoxic agents. Functions primarily as negative regulator, but can also function as activator, depending on the context. Required for the initiation of the B-cell response, but also for its down-regulation and termination. Plays an important role in the regulation of B-cell differentiation, proliferation, survival and apoptosis, and is important for immune self-tolerance. Acts downstream of several immune receptors, including the B-cell receptor, CD79A, CD79B, CD5, CD19, CD22, FCER1, FCGR2, FCGR1A, TLR2 and TLR4. Plays a role in the inflammatory response to bacterial lipopolysaccharide. Mediates the responses to cytokines and growth factors in hematopoietic progenitors, platelets, erythrocytes, and in mature myeloid cells, such as dendritic cells, neutrophils and eosinophils. Acts downstream of EPOR, KIT, MPL, the chemokine receptor CXCR4, as well as the receptors for IL3, IL5 and CSF2. Plays an important role in integrin signaling. Regulates cell proliferation, survival, differentiation, migration, adhesion, degranulation, and cytokine release. Involved in the regulation of endothelial activation, neutrophil adhesion and transendothelial migration. Down-regulates signaling pathways by phosphorylation of immunoreceptor tyrosine-based inhibitory motifs (ITIM), that then serve as binding sites for phosphatases, such as PTPN6/SHP-1, PTPN11/SHP-2 and INPP5D/SHIP-1, that modulate signaling by dephosphorylation of kinases and their substrates. Phosphorylates LIME1 in response to CD22 activation. Phosphorylates BTK, CBL, CD5, CD19, CD72, CD79A, CD79B, CSF2RB, DOK1, HCLS1, LILRB3/PIR-B, MS4A2/FCER1B, SYK and TEC. Promotes phosphorylation of SIRPA, PTPN6/SHP-1, PTPN11/SHP-2 and INPP5D/SHIP-1. Required for rapid phosphorylation of FER in response to FCER1 activation. Mediates KIT phosphorylation. Acts as an effector of EPOR (erythropoietin receptor) in controlling KIT expression and may play a role in erythroid differentiation during the switch between proliferation and maturation. Depending on the context, activates or inhibits several signaling cascades. Regulates phosphatidylinositol 3-kinase activity and AKT1 activation. Regulates activation of the MAP kinase signaling cascade, including activation of MAP2K1/MEK1, MAPK1/ERK2, MAPK3/ERK1, MAPK8/JNK1 and MAPK9/JNK2. Mediates activation of STAT5A and/or STAT5B. Phosphorylates LPXN on 'Tyr-72'. Kinase activity facilitates TLR4-TLR6 heterodimerization and signal initiation. Phosphorylates SCIMP on 'Tyr-96'; this enhances binding of SCIMP to TLR4, promoting the phosphorylation of TLR4, and a selective cytokine response to lipopolysaccharide in macrophages. Phosphorylates CLNK. Phosphorylates BCAR1/CAS and NEDD9/HEF1. The protein is Tyrosine-protein kinase Lyn (Lyn) of Rattus norvegicus (Rat).